The sequence spans 86 residues: Latartoxin-1b (86 aa).

The first 19 residues, 1–19 (MKILVLAVVCTVLLQVALS), serve as a signal peptide directing secretion. The propeptide at 20 to 26 (ADSEEVR) is removed in mature form. The short motif at 23 to 26 (EEVR) is the Processing quadruplet motif element. 4 disulfide bridges follow: Cys28–Cys43, Cys35–Cys48, Cys42–Cys65, and Cys50–Cys63.

The protein belongs to the neurotoxin 19 (CSTX) family. Post-translationally, contains 4 disulfide bonds. In terms of processing, cleavage of the propeptide depends on the processing quadruplet motif (XXXR, with at least one of X being E). In terms of tissue distribution, expressed by the venom gland.

The protein resides in the secreted. In terms of biological role, insect toxin. This Lachesana tarabaevi (Spider) protein is Latartoxin-1b.